A 170-amino-acid polypeptide reads, in one-letter code: Adenine phosphoribosyltransferase (170 aa).

It belongs to the purine/pyrimidine phosphoribosyltransferase family. Homodimer.

It localises to the cytoplasm. It carries out the reaction AMP + diphosphate = 5-phospho-alpha-D-ribose 1-diphosphate + adenine. Its pathway is purine metabolism; AMP biosynthesis via salvage pathway; AMP from adenine: step 1/1. Its function is as follows. Catalyzes a salvage reaction resulting in the formation of AMP, that is energically less costly than de novo synthesis. The sequence is that of Adenine phosphoribosyltransferase from Lactococcus lactis subsp. lactis (strain IL1403) (Streptococcus lactis).